The following is a 261-amino-acid chain: HTH-type transcriptional repressor CsqR (261 aa).

Positions G8–R63 constitute an HTH deoR-type domain. The H-T-H motif DNA-binding region spans M25–D44.

As to quaternary structure, monomer in the absence of DNA. Exhibits a high level of cooperativity once it is bound to its target DNA.

Its activity is regulated as follows. Inactivated in the presence of the effectors sulfoquinovose and sulfoquinovosyl glycerol, leading to the de-repression of the target genes. Its function is as follows. Involved in the regulation of the sulfoquinovose operon. Represses the expression of the yihUTS operon and of the yihV and csqR genes. Binds DNA inside the spacer between the bidirectional transcription units comprising the yihUTS operon and the yihV gene, and upstream the csqR gene itself. This chain is HTH-type transcriptional repressor CsqR, found in Escherichia coli (strain K12).